The primary structure comprises 212 residues: Interleukin-6 (212 aa).

The N-terminal stretch at 1–29 (MNSFSTSAFGPVAFSLGLLLVLPAAFPAP) is a signal peptide. Cysteines 72 and 78 form a disulfide. Asparagine 73 carries an N-linked (GlcNAc...) asparagine glycan. Phosphoserine; by FAM20C is present on serine 81. An intrachain disulfide couples cysteine 101 to cysteine 111.

Belongs to the IL-6 superfamily. Component of a hexamer of two molecules each of IL6, IL6R and IL6ST; first binds to IL6R to associate with the signaling subunit IL6ST. Interacts with IL6R (via the N-terminal ectodomain); this interaction may be affected by IL6R-binding with SORL1, hence decreasing IL6 cis signaling. Interacts with SORL1 (via the N-terminal ectodomain); this interaction leads to IL6 internalization and lysosomal degradation. May form a trimeric complex with the soluble SORL1 ectodomain and soluble IL6R receptor; this interaction might stabilize circulating IL6, hence promoting IL6 trans signaling. Post-translationally, N- and O-glycosylated. As to expression, produced by skeletal muscle.

The protein localises to the secreted. In terms of biological role, cytokine with a wide variety of biological functions in immunity, tissue regeneration, and metabolism. Binds to IL6R, then the complex associates to the signaling subunit IL6ST/gp130 to trigger the intracellular IL6-signaling pathway. The interaction with the membrane-bound IL6R and IL6ST stimulates 'classic signaling', whereas the binding of IL6 and soluble IL6R to IL6ST stimulates 'trans-signaling'. Alternatively, 'cluster signaling' occurs when membrane-bound IL6:IL6R complexes on transmitter cells activate IL6ST receptors on neighboring receiver cells. IL6 is a potent inducer of the acute phase response. Rapid production of IL6 contributes to host defense during infection and tissue injury, but excessive IL6 synthesis is involved in disease pathology. In the innate immune response, is synthesized by myeloid cells, such as macrophages and dendritic cells, upon recognition of pathogens through toll-like receptors (TLRs) at the site of infection or tissue injury. In the adaptive immune response, is required for the differentiation of B cells into immunoglobulin-secreting cells. Plays a major role in the differentiation of CD4(+) T cell subsets. Essential factor for the development of T follicular helper (Tfh) cells that are required for the induction of germinal-center formation. Required to drive naive CD4(+) T cells to the Th17 lineage. Also required for proliferation of myeloma cells and the survival of plasmablast cells. Functionally, acts as an essential factor in bone homeostasis and on vessels directly or indirectly by induction of VEGF, resulting in increased angiogenesis activity and vascular permeability. Induces, through 'trans-signaling' and synergistically with IL1B and TNF, the production of VEGF. Involved in metabolic controls, is discharged into the bloodstream after muscle contraction increasing lipolysis and improving insulin resistance. 'Trans-signaling' in central nervous system also regulates energy and glucose homeostasis. Mediates, through GLP-1, crosstalk between insulin-sensitive tissues, intestinal L cells and pancreatic islets to adapt to changes in insulin demand. Also acts as a myokine. Plays a protective role during liver injury, being required for maintenance of tissue regeneration. Also has a pivotal role in iron metabolism by regulating HAMP/hepcidin expression upon inflammation or bacterial infection. Through activation of IL6ST-YAP-NOTCH pathway, induces inflammation-induced epithelial regeneration. This chain is Interleukin-6, found in Homo sapiens (Human).